A 517-amino-acid polypeptide reads, in one-letter code: GMP synthase [glutamine-hydrolyzing] (517 aa).

The region spanning 11–202 (KIIALDFGSQ…AFDVCGAKAN (192 aa)) is the Glutamine amidotransferase type-1 domain. Cys-88 serves as the catalytic Nucleophile. Active-site residues include His-176 and Glu-178. The 190-residue stretch at 203-392 (WTMDDFIDMQ…LGIPHELVWR (190 aa)) folds into the GMPS ATP-PPase domain. Residue 230–236 (SGGVDSS) participates in ATP binding.

As to quaternary structure, homodimer.

It catalyses the reaction XMP + L-glutamine + ATP + H2O = GMP + L-glutamate + AMP + diphosphate + 2 H(+). The protein operates within purine metabolism; GMP biosynthesis; GMP from XMP (L-Gln route): step 1/1. In terms of biological role, catalyzes the synthesis of GMP from XMP. This is GMP synthase [glutamine-hydrolyzing] from Limosilactobacillus reuteri (strain DSM 20016) (Lactobacillus reuteri).